The primary structure comprises 429 residues: Ribosomal RNA small subunit methyltransferase B (429 aa).

Residues 254-260 (CAAPGGK), Asp-277, Asp-303, and Asp-322 contribute to the S-adenosyl-L-methionine site. Cys-375 acts as the Nucleophile in catalysis.

The protein belongs to the class I-like SAM-binding methyltransferase superfamily. RsmB/NOP family.

It localises to the cytoplasm. The catalysed reaction is cytidine(967) in 16S rRNA + S-adenosyl-L-methionine = 5-methylcytidine(967) in 16S rRNA + S-adenosyl-L-homocysteine + H(+). Its function is as follows. Specifically methylates the cytosine at position 967 (m5C967) of 16S rRNA. The protein is Ribosomal RNA small subunit methyltransferase B of Shigella boydii serotype 4 (strain Sb227).